The following is a 53-amino-acid chain: ATP synthase protein 8 (53 aa).

The helical transmembrane segment at 4–24 threads the bilayer; that stretch reads MAPISWLLLFIVFSITFILFC.

It belongs to the ATPase protein 8 family. F-type ATPases have 2 components, CF(1) - the catalytic core - and CF(0) - the membrane proton channel.

Its subcellular location is the mitochondrion membrane. Its function is as follows. Mitochondrial membrane ATP synthase (F(1)F(0) ATP synthase or Complex V) produces ATP from ADP in the presence of a proton gradient across the membrane which is generated by electron transport complexes of the respiratory chain. F-type ATPases consist of two structural domains, F(1) - containing the extramembraneous catalytic core and F(0) - containing the membrane proton channel, linked together by a central stalk and a peripheral stalk. During catalysis, ATP synthesis in the catalytic domain of F(1) is coupled via a rotary mechanism of the central stalk subunits to proton translocation. Part of the complex F(0) domain. Minor subunit located with subunit a in the membrane. The sequence is that of ATP synthase protein 8 (mt:ATPase8) from Drosophila yakuba (Fruit fly).